The chain runs to 393 residues: Lipid-A-disaccharide synthase (393 aa).

The protein belongs to the LpxB family.

The enzyme catalyses a lipid X + a UDP-2-N,3-O-bis[(3R)-3-hydroxyacyl]-alpha-D-glucosamine = a lipid A disaccharide + UDP + H(+). The protein operates within bacterial outer membrane biogenesis; LPS lipid A biosynthesis. Functionally, condensation of UDP-2,3-diacylglucosamine and 2,3-diacylglucosamine-1-phosphate to form lipid A disaccharide, a precursor of lipid A, a phosphorylated glycolipid that anchors the lipopolysaccharide to the outer membrane of the cell. This Rhodopseudomonas palustris (strain HaA2) protein is Lipid-A-disaccharide synthase.